We begin with the raw amino-acid sequence, 151 residues long: Mini-ribonuclease 3 (151 aa).

Asp28 is a catalytic residue.

Belongs to the MrnC RNase family. As to quaternary structure, homodimer. The cofactor is Mg(2+).

It localises to the cytoplasm. Its function is as follows. Involved in correct processing of both the 5' and 3' ends of 23S rRNA precursor. Processes 30S rRNA precursor transcript even in absence of ribonuclease 3 (Rnc); Rnc processes 30S rRNA into smaller rRNA precursors. In Clostridium tetani (strain Massachusetts / E88), this protein is Mini-ribonuclease 3.